A 95-amino-acid polypeptide reads, in one-letter code: Aspartyl/glutamyl-tRNA(Asn/Gln) amidotransferase subunit C (95 aa).

Belongs to the GatC family. In terms of assembly, heterotrimer of A, B and C subunits.

The catalysed reaction is L-glutamyl-tRNA(Gln) + L-glutamine + ATP + H2O = L-glutaminyl-tRNA(Gln) + L-glutamate + ADP + phosphate + H(+). The enzyme catalyses L-aspartyl-tRNA(Asn) + L-glutamine + ATP + H2O = L-asparaginyl-tRNA(Asn) + L-glutamate + ADP + phosphate + 2 H(+). Its function is as follows. Allows the formation of correctly charged Asn-tRNA(Asn) or Gln-tRNA(Gln) through the transamidation of misacylated Asp-tRNA(Asn) or Glu-tRNA(Gln) in organisms which lack either or both of asparaginyl-tRNA or glutaminyl-tRNA synthetases. The reaction takes place in the presence of glutamine and ATP through an activated phospho-Asp-tRNA(Asn) or phospho-Glu-tRNA(Gln). The sequence is that of Aspartyl/glutamyl-tRNA(Asn/Gln) amidotransferase subunit C from Rhizorhabdus wittichii (strain DSM 6014 / CCUG 31198 / JCM 15750 / NBRC 105917 / EY 4224 / RW1) (Sphingomonas wittichii).